We begin with the raw amino-acid sequence, 266 residues long: Oxygen-evolving enhancer protein 2-3, chloroplastic (266 aa).

A chloroplast-targeting transit peptide spans 1 to 80 (MASTQCFLHH…VGSKVSPADA (80 aa)).

The protein belongs to the PsbP family.

It is found in the plastid. Its subcellular location is the chloroplast thylakoid membrane. Functionally, may be involved in the regulation of photosystem II. This is Oxygen-evolving enhancer protein 2-3, chloroplastic (PSBP3) from Nicotiana tabacum (Common tobacco).